Reading from the N-terminus, the 382-residue chain is Sphingosine 1-phosphate receptor 1 (382 aa).

Position 2 is an N-acetylvaline (Val2). Topologically, residues 2–46 (VSTSIPEVKALRSSVSDYGNYDIIVRHYNYTGKLNIGAEKDHGIK) are extracellular. Lys10 carries the post-translational modification N6-acetyllysine. N-linked (GlcNAc...) asparagine glycosylation is present at Asn30. A helical membrane pass occupies residues 47–68 (LTSVVFILICCFIILENIFVLL). Residues 69-82 (TIWKTKKFHRPMYY) lie on the Cytoplasmic side of the membrane. The chain crosses the membrane as a helical span at residues 83–104 (FIGNLALSDLLAGVAYTANLLL). Residues 105–116 (SGATTYKLTPAQ) are Extracellular-facing. A helical membrane pass occupies residues 117–138 (WFLREGSMFVALSASVFSLLAI). Sphing-4-enine 1-phosphate is bound at residue 120–121 (RE). Residues 139 to 160 (AIERYITMLKMKLHNGSNSSRS) are Cytoplasmic-facing. Residues 161-182 (FLLISACWVISLILGGLPIMGW) traverse the membrane as a helical segment. Topologically, residues 183–196 (NCISSLSSCSTVLP) are extracellular. The cysteines at positions 184 and 191 are disulfide-linked. The chain crosses the membrane as a helical span at residues 197-224 (LYHKHYILFCTTVFTLLLLSIVILYCRI). Over 225–257 (YSLVRTRSRRLTFRKNISKASRSSEKSLALLKT) the chain is Cytoplasmic. At Thr236 the chain carries Phosphothreonine. Residues 258–278 (VIIVLSVFIACWAPLFILLLL) traverse the membrane as a helical segment. A sphing-4-enine 1-phosphate-binding site is contributed by 265–269 (FIACW). At 279-289 (DVGCKAKTCDI) the chain is on the extracellular side. A disulfide bridge connects residues Cys282 and Cys287. The helical transmembrane segment at 290 to 310 (LYKAEYFLVLAVLNSGTNPII) threads the bilayer. The Cytoplasmic portion of the chain corresponds to 311–382 (YTLTNKEMRR…MSSGNVNSSS (72 aa)). A lipid anchor (S-palmitoyl cysteine) is attached at Cys328. A disordered region spans residues 348-382 (MEFSRSKSDNSSHPQKDDGDNPETIMSSGNVNSSS). Residues Ser351 and Ser353 each carry the phosphoserine modification. Positions 351–366 (SRSKSDNSSHPQKDDG) are enriched in basic and acidic residues. A compositionally biased stretch (polar residues) spans 371–382 (TIMSSGNVNSSS).

The protein belongs to the G-protein coupled receptor 1 family. Interacts with GNAI1 and GNAI3. Interacts with CD69; this interaction promotes S1PR1 degradation. Post-translationally, palmitoylated by ZDHHC5. Palmitoylation is required for targeting to plasma membrane, enabling G(i) coupling. As to expression, expressed in a wide variety of tissues with highest levels in brain, heart and spleen. Lower levels found in kidney, liver, lung, muscle, placenta, thymus, and uterus. Very low levels in intestine, stomach and testis. According to PubMed:9931453, expressed modestly in apparent endothelial cells surrounding some blood vessels (e.g. aortic trunk).

It is found in the cell membrane. It localises to the endosome. Its subcellular location is the membrane raft. Its function is as follows. G-protein coupled receptor for the bioactive lysosphingolipid sphingosine 1-phosphate (S1P) that seems to be coupled to the G(i) subclass of heteromeric G proteins. Signaling leads to the activation of RAC1, SRC, PTK2/FAK1 and MAP kinases. Plays an important role in cell migration, probably via its role in the reorganization of the actin cytoskeleton and the formation of lamellipodia in response to stimuli that increase the activity of the sphingosine kinase SPHK1. Required for normal chemotaxis toward sphingosine 1-phosphate. Required for normal embryonic heart development and normal cardiac morphogenesis. Plays an important role in the regulation of sprouting angiogenesis and vascular maturation. Inhibits sprouting angiogenesis to prevent excessive sprouting during blood vessel development. Required for normal egress of mature T-cells from the thymus into the blood stream and into peripheral lymphoid organs. Plays a role in the migration of osteoclast precursor cells, the regulation of bone mineralization and bone homeostasis. Plays a role in responses to oxidized 1-palmitoyl-2-arachidonoyl-sn-glycero-3-phosphocholine by pulmonary endothelial cells and in the protection against ventilator-induced lung injury. The protein is Sphingosine 1-phosphate receptor 1 of Mus musculus (Mouse).